The sequence spans 57 residues: Small ribosomal subunit protein bS21 (57 aa).

The tract at residues 34–57 (RKEHYIKPSVQKKNRQKNMRSKKR) is disordered. Residues 43-57 (VQKKNRQKNMRSKKR) are compositionally biased toward basic residues.

This sequence belongs to the bacterial ribosomal protein bS21 family.

The polypeptide is Small ribosomal subunit protein bS21 (Aster yellows witches'-broom phytoplasma (strain AYWB)).